Here is a 130-residue protein sequence, read N- to C-terminus: Capsid protein (130 aa).

The interval 32–105 is viral RNA-binding; it reads EWISSNSRSQ…FATNSDCELI (74 aa).

This sequence belongs to the Leviviricetes capsid protein family. As to quaternary structure, homodimer. The capsid proteins form dimers that assemble by group of 5. Twelve such pentamers are linked together with free dimers. The homodimers binds to the viral RNA via an operator hairpin, but also to many other RNA sequences in the viral genome; this interaction probably shifts the virus from the replicative to the assembly phase and ensures specific encapsidation of the viral genome.

It localises to the virion. Its function is as follows. Capsid protein self-assembles to form an icosahedral capsid with a T=3 symmetry, about 26 nm in diameter, and consisting of 89 capsid proteins dimers (178 capsid proteins). Involved in viral genome encapsidation through the interaction between a capsid protein dimer and the multiple packaging signals present in the RNA genome. The capsid also contains 1 copy of the A2 maturation protein. Functionally, acts as a translational repressor of viral replicase synthesis late in infection. This latter function is the result of capsid protein interaction with an RNA hairpin which contains the replicase ribosome-binding site. The sequence is that of Capsid protein from Enterobacteria phage ZR (Bacteriophage ZR).